A 437-amino-acid chain; its full sequence is Glutamate-1-semialdehyde 2,1-aminomutase (437 aa).

Residue Lys-274 is modified to N6-(pyridoxal phosphate)lysine.

Belongs to the class-III pyridoxal-phosphate-dependent aminotransferase family. HemL subfamily. In terms of assembly, homodimer. Pyridoxal 5'-phosphate is required as a cofactor.

It localises to the cytoplasm. The enzyme catalyses (S)-4-amino-5-oxopentanoate = 5-aminolevulinate. It functions in the pathway porphyrin-containing compound metabolism; protoporphyrin-IX biosynthesis; 5-aminolevulinate from L-glutamyl-tRNA(Glu): step 2/2. This is Glutamate-1-semialdehyde 2,1-aminomutase from Verminephrobacter eiseniae (strain EF01-2).